Reading from the N-terminus, the 510-residue chain is NAD(P)H-quinone oxidoreductase subunit 2 A, chloroplastic (510 aa).

The next 13 helical transmembrane spans lie at 24-44 (LLLFDGSLIFPECILIFGLIL), 57-77 (IPWLYFISSTSLVMSITALLF), 99-119 (IFQFLILLCSTLCIPLSVEYI), 124-144 (MAITEFLLFVLTATLGGMFLC), 149-169 (LITIFVAPECFSLCSYLLSGY), 183-203 (YLLMGGASSSILVHGFSWLYG), 227-247 (PGISIALIFITVGIGFKLSPA), 295-315 (WHLLLEILAILSMILGNLIAI), 323-343 (MLAYSSIGQIGYVIIGIIVGD), 354-374 (YMLFYISMNLGTFACIVLFGL), 395-415 (ALSLALCLLSLGGLPPLAGFF), 418-438 (LYLFWCGWQAGLYFLVLIGLL), and 484-504 (MIVCVIASTIPGISMNPIIAI).

This sequence belongs to the complex I subunit 2 family. In terms of assembly, NDH is composed of at least 16 different subunits, 5 of which are encoded in the nucleus.

It is found in the plastid. It localises to the chloroplast thylakoid membrane. The enzyme catalyses a plastoquinone + NADH + (n+1) H(+)(in) = a plastoquinol + NAD(+) + n H(+)(out). It catalyses the reaction a plastoquinone + NADPH + (n+1) H(+)(in) = a plastoquinol + NADP(+) + n H(+)(out). In terms of biological role, NDH shuttles electrons from NAD(P)H:plastoquinone, via FMN and iron-sulfur (Fe-S) centers, to quinones in the photosynthetic chain and possibly in a chloroplast respiratory chain. The immediate electron acceptor for the enzyme in this species is believed to be plastoquinone. Couples the redox reaction to proton translocation, and thus conserves the redox energy in a proton gradient. This is NAD(P)H-quinone oxidoreductase subunit 2 A, chloroplastic from Panax ginseng (Korean ginseng).